The sequence spans 969 residues: RNA polymerase-associated protein RapA (969 aa).

In terms of domain architecture, Helicase ATP-binding spans 164–334; the sequence is EVGRRHAPRV…FARLRLLDPD (171 aa). ATP is bound at residue 177–184; sequence DEVGLGKT. The DEAH box motif lies at 280–283; sequence DEAH. Residues 492 to 646 enclose the Helicase C-terminal domain; the sequence is RVNWLLEKVK…TCPTGRAVYD (155 aa).

Belongs to the SNF2/RAD54 helicase family. RapA subfamily. Interacts with the RNAP. Has a higher affinity for the core RNAP than for the holoenzyme. Its ATPase activity is stimulated by binding to RNAP.

In terms of biological role, transcription regulator that activates transcription by stimulating RNA polymerase (RNAP) recycling in case of stress conditions such as supercoiled DNA or high salt concentrations. Probably acts by releasing the RNAP, when it is trapped or immobilized on tightly supercoiled DNA. Does not activate transcription on linear DNA. Probably not involved in DNA repair. The chain is RNA polymerase-associated protein RapA from Vibrio campbellii (strain ATCC BAA-1116).